The chain runs to 464 residues: Mitogen-activated protein kinase 10 (464 aa).

In terms of domain architecture, Protein kinase spans 64 to 359 (YQNLKPIGSG…VDDALQHPYI (296 aa)). Residues 70–78 (IGSGAQGIV) and K93 contribute to the ATP site. D189 serves as the catalytic Proton acceptor. At T221 the chain carries Phosphothreonine; by MAP2K7. Residues 221–223 (TPY) carry the TXY motif. Y223 bears the Phosphotyrosine; by MAP2K4 mark. The interval 405–464 (TKNGVVKGQPSPSGAAVNSSESLPPSSSVNDISSMSTDQTLASDTDSSLEASAGPLGCCR) is disordered. A compositionally biased stretch (low complexity) spans 423 to 432 (SSESLPPSSS). Over residues 433–454 (VNDISSMSTDQTLASDTDSSLE) the composition is skewed to polar residues. 2 S-palmitoyl cysteine lipidation sites follow: C462 and C463.

It belongs to the protein kinase superfamily. CMGC Ser/Thr protein kinase family. MAP kinase subfamily. As to quaternary structure, interacts with MAPK8IP1/JIP-1 and MAPK8IP3/JIP-3/JSAP1. Interacts with SPAG9/MAPK8IP4/JIP4. Interacts with HDAC9 and MAPKBP1. Interacts with ARRB2; the interaction enhances MAPK10 activation by MAP3K5. Interacts with SARM1. Interacts with JUND; interaction is inhibited in the presence of MEN1. Mg(2+) is required as a cofactor. Post-translationally, dually phosphorylated on Thr-221 and Tyr-223 by MAP2K4 and MAP2K7, which activates the enzyme. MAP2K7 shows a strong preference for Thr-221 while MAP2K4 phosphorylates Tyr-223 preferentially. Weakly autophosphorylated on threonine and tyrosine residues in vitro. In terms of processing, palmitoylation regulates subcellular location and axonal development.

The protein resides in the cytoplasm. Its subcellular location is the membrane. The protein localises to the nucleus. It localises to the mitochondrion. The enzyme catalyses L-seryl-[protein] + ATP = O-phospho-L-seryl-[protein] + ADP + H(+). It catalyses the reaction L-threonyl-[protein] + ATP = O-phospho-L-threonyl-[protein] + ADP + H(+). Activated by threonine and tyrosine phosphorylation by two dual specificity kinases, MAP2K4 and MAP2K7. MAP2K7 phosphorylates MAPK10 on Thr-221 causing a conformational change and a large increase in Vmax for the enzyme. MAP2K4 then phosphorylates Tyr-223 resulting in a further increase in Vmax. Inhibited by dual specificity phosphatases, such as DUSP1. Inhibited by HDAC9. Functionally, serine/threonine-protein kinase involved in various processes such as neuronal proliferation, differentiation, migration and programmed cell death. Extracellular stimuli such as pro-inflammatory cytokines or physical stress stimulate the stress-activated protein kinase/c-Jun N-terminal kinase (SAP/JNK) signaling pathway. In this cascade, two dual specificity kinases MAP2K4/MKK4 and MAP2K7/MKK7 phosphorylate and activate MAPK10/JNK3. In turn, MAPK10/JNK3 phosphorylates a number of transcription factors, primarily components of AP-1 such as JUN and ATF2 and thus regulates AP-1 transcriptional activity. Plays regulatory roles in the signaling pathways during neuronal apoptosis. Phosphorylates the neuronal microtubule regulator STMN2. Acts in the regulation of the amyloid-beta precursor protein/APP signaling during neuronal differentiation by phosphorylating APP. Also participates in neurite growth in spiral ganglion neurons. Phosphorylates the CLOCK-BMAL1 heterodimer and plays a role in the photic regulation of the circadian clock. Phosphorylates JUND and this phosphorylation is inhibited in the presence of MEN1. The chain is Mitogen-activated protein kinase 10 (Mapk10) from Rattus norvegicus (Rat).